A 45-amino-acid polypeptide reads, in one-letter code: Conotoxin reg3.12 (45 aa).

Residues 1-31 constitute a propeptide that is removed on maturation; the sequence is DQPVERHAGNKRHLNPTIRRAMIIDANRREK. 3 disulfide bridges follow: Cys-32/Cys-44, Cys-33/Cys-42, and Cys-38/Cys-45.

The protein belongs to the conotoxin M superfamily. Expressed by the venom duct.

Its subcellular location is the secreted. The protein is Conotoxin reg3.12 of Conus regius (Crown cone).